Consider the following 256-residue polypeptide: tRNA pseudouridine synthase A (256 aa).

D55 (nucleophile) is an active-site residue. Y113 contributes to the substrate binding site.

Belongs to the tRNA pseudouridine synthase TruA family. As to quaternary structure, homodimer.

It catalyses the reaction uridine(38/39/40) in tRNA = pseudouridine(38/39/40) in tRNA. Formation of pseudouridine at positions 38, 39 and 40 in the anticodon stem and loop of transfer RNAs. The chain is tRNA pseudouridine synthase A from Ligilactobacillus salivarius (strain UCC118) (Lactobacillus salivarius).